Here is a 442-residue protein sequence, read N- to C-terminus: 3-phosphoshikimate 1-carboxyvinyltransferase (442 aa).

Positions 1–11 (MQVSRPLTVSA) are enriched in polar residues. Residues 1-25 (MQVSRPLTVSASPKGLSGRTRVPGD) form a disordered region. 3 residues coordinate 3-phosphoshikimate: K26, S27, and R31. Phosphoenolpyruvate is bound at residue K26. Phosphoenolpyruvate-binding residues include G98 and R126. 3-phosphoshikimate contacts are provided by S171, Q173, D324, and K351. Q173 is a phosphoenolpyruvate binding site. D324 (proton acceptor) is an active-site residue. The phosphoenolpyruvate site is built by R355 and R398.

Belongs to the EPSP synthase family. Monomer.

It is found in the cytoplasm. The enzyme catalyses 3-phosphoshikimate + phosphoenolpyruvate = 5-O-(1-carboxyvinyl)-3-phosphoshikimate + phosphate. It participates in metabolic intermediate biosynthesis; chorismate biosynthesis; chorismate from D-erythrose 4-phosphate and phosphoenolpyruvate: step 6/7. Functionally, catalyzes the transfer of the enolpyruvyl moiety of phosphoenolpyruvate (PEP) to the 5-hydroxyl of shikimate-3-phosphate (S3P) to produce enolpyruvyl shikimate-3-phosphate and inorganic phosphate. The protein is 3-phosphoshikimate 1-carboxyvinyltransferase of Gluconobacter oxydans (strain 621H) (Gluconobacter suboxydans).